The sequence spans 237 residues: UDP-2,3-diacylglucosamine hydrolase (237 aa).

Mn(2+) is bound by residues aspartate 8, histidine 10, aspartate 41, asparagine 78, and histidine 113. 78 to 79 (NR) is a substrate binding site. Residues aspartate 121, serine 159, glutamine 164, and histidine 195 each coordinate substrate. Residues histidine 195 and histidine 197 each contribute to the Mn(2+) site.

Belongs to the LpxH family. Mn(2+) serves as cofactor.

Its subcellular location is the cell inner membrane. The enzyme catalyses UDP-2-N,3-O-bis[(3R)-3-hydroxytetradecanoyl]-alpha-D-glucosamine + H2O = 2-N,3-O-bis[(3R)-3-hydroxytetradecanoyl]-alpha-D-glucosaminyl 1-phosphate + UMP + 2 H(+). Its pathway is glycolipid biosynthesis; lipid IV(A) biosynthesis; lipid IV(A) from (3R)-3-hydroxytetradecanoyl-[acyl-carrier-protein] and UDP-N-acetyl-alpha-D-glucosamine: step 4/6. In terms of biological role, hydrolyzes the pyrophosphate bond of UDP-2,3-diacylglucosamine to yield 2,3-diacylglucosamine 1-phosphate (lipid X) and UMP by catalyzing the attack of water at the alpha-P atom. Involved in the biosynthesis of lipid A, a phosphorylated glycolipid that anchors the lipopolysaccharide to the outer membrane of the cell. This Chromobacterium violaceum (strain ATCC 12472 / DSM 30191 / JCM 1249 / CCUG 213 / NBRC 12614 / NCIMB 9131 / NCTC 9757 / MK) protein is UDP-2,3-diacylglucosamine hydrolase.